We begin with the raw amino-acid sequence, 363 residues long: NAD(P)H-quinone oxidoreductase subunit 1, chloroplastic (363 aa).

6 consecutive transmembrane segments (helical) span residues 28-48 (WVLV…LVIV), 98-118 (FSIG…VIPF), 127-147 (LPIG…GLLM), 248-268 (YSGI…LVSS), 300-320 (VFGM…FLFI), and 343-363 (FLLP…LFSL).

It belongs to the complex I subunit 1 family. In terms of assembly, NDH is composed of at least 16 different subunits, 5 of which are encoded in the nucleus.

The protein resides in the plastid. The protein localises to the chloroplast thylakoid membrane. The enzyme catalyses a plastoquinone + NADH + (n+1) H(+)(in) = a plastoquinol + NAD(+) + n H(+)(out). The catalysed reaction is a plastoquinone + NADPH + (n+1) H(+)(in) = a plastoquinol + NADP(+) + n H(+)(out). Functionally, NDH shuttles electrons from NAD(P)H:plastoquinone, via FMN and iron-sulfur (Fe-S) centers, to quinones in the photosynthetic chain and possibly in a chloroplast respiratory chain. The immediate electron acceptor for the enzyme in this species is believed to be plastoquinone. Couples the redox reaction to proton translocation, and thus conserves the redox energy in a proton gradient. This is NAD(P)H-quinone oxidoreductase subunit 1, chloroplastic from Cucumis sativus (Cucumber).